The sequence spans 255 residues: S-adenosyl-L-methionine-dependent uroporphyrinogen III methyltransferase (255 aa).

S-adenosyl-L-homocysteine is bound by residues Pro-15, 91–93 (GGD), 121–122 (TS), Met-175, and Ala-232.

It belongs to the precorrin methyltransferase family. Homodimer.

The enzyme catalyses uroporphyrinogen III + 2 S-adenosyl-L-methionine = precorrin-2 + 2 S-adenosyl-L-homocysteine + H(+). It participates in porphyrin-containing compound metabolism; siroheme biosynthesis; precorrin-2 from uroporphyrinogen III: step 1/1. Its function is as follows. Involved in the archaeal biosynthesis of heme. Catalyzes the methylation of carbons 2 and 7 of uroporphyrinogen-III (UROGEN) to yield precorrin-2. It does not catalyze the overmethylation of precorrin-2 to trimethylpyrrocorphin. The protein is S-adenosyl-L-methionine-dependent uroporphyrinogen III methyltransferase of Methanosarcina barkeri (strain Fusaro / DSM 804).